The following is a 655-amino-acid chain: Protein nipi-3 (655 aa).

The interval 1 to 35 is disordered; it reads MARTKCKTKTVANPRTGVRKTAKDLSEPVRQDAVS. The segment covering 21-35 has biased composition (basic and acidic residues); it reads TAKDLSEPVRQDAVS. Residues 200–470 form the Protein kinase domain; the sequence is IGIFVIYGTG…NQVNGDFPEI (271 aa). ATP contacts are provided by residues 206 to 214 and K235; that span reads YGTGLVTRA.

Belongs to the protein kinase superfamily. CAMK Ser/Thr protein kinase family. In terms of assembly, may interact with transcription factor cebp-1 (via N-terminus). As to expression, expressed in epidermis, pharynx, intestine, a subset of head neurons and motoneurons.

The protein localises to the nucleus. Its function is as follows. Adapter protein that regulates different signaling pathways. Required for larval development and viability. Involved in negatively modulating pmk-1 p38/MAPK signaling. Involved in innate immunity, acting either in a manner dependent upon, or independent of, the pmk-1 or pmk-3 p38/MAPK pathways. Has a protective role in response to infection by the Gram-negative bacterium P.aeruginosa, acting by negatively modulating expression of cebp-1, and regulating the pmk-1 p38/MAPK pathway, leading to activation of transcription factor skn-1. Required to prevent P.aeruginosa toxin ToxA-mediated lethality, probably acting via modulating the effects of translational inhibition caused by the toxin. By regulating the up-regulation in the epidermis of antimicrobial peptides nlp-29 and nlp-31, plays a role in resistance to fungal infection. This chain is Protein nipi-3, found in Caenorhabditis elegans.